An 84-amino-acid polypeptide reads, in one-letter code: MERSNRKTRIGRVVSDKMEKTIVVAVEGKVRHPLYGKTINRSKKFKVHDENNEARINDRVLIMETRPLSKDKRWRLVQIVEKAK.

The protein belongs to the universal ribosomal protein uS17 family. Part of the 30S ribosomal subunit.

In terms of biological role, one of the primary rRNA binding proteins, it binds specifically to the 5'-end of 16S ribosomal RNA. This chain is Small ribosomal subunit protein uS17, found in Clostridium novyi (strain NT).